Here is a 1749-residue protein sequence, read N- to C-terminus: Intraflagellar transport protein 172 homolog (1749 aa).

At Met1 the chain carries N-acetylmethionine. A Glycyl lysine isopeptide (Lys-Gly) (interchain with G-Cter in SUMO1) cross-link involves residue Lys4. WD repeat units follow at residues 14–53 (DGAA…RDKF), 64–103 (RKSY…GDKK), 110–148 (IQTS…SSTI), 150–191 (GTES…ESQG), 195–233 (NHPC…QTFD), 238–278 (PQER…WEEA), 284–323 (TNLY…SIYK), 483–520 (SHES…CSKT), and 521–559 (MILN…ERVT). One copy of the TPR 1 repeat lies at 593–624 (DEGLIEFGTAIDDGNYIRATAFLETLEMTPET). The residue at position 672 (Arg672) is an Omega-N-methylarginine. TPR repeat units lie at residues 692–725 (EKNY…DECI), 809–842 (GELY…MKAV), 854–887 (VKLE…IKAI), 912–945 (SKYY…KDAI), 947–970 (MYTQ…PEDV), 971–1004 (SVLY…DLAI), 1042–1075 (EGRL…EEAY), 1142–1175 (PEVH…KEAV), 1276–1309 (VEGF…GNSG), 1345–1378 (IGKH…NKAK), 1411–1445 (GVDV…LHKY), 1447–1477 (ALYA…NPQN), and 1574–1607 (DKAF…TDAI).

The protein belongs to the IFT172 family. In terms of assembly, interacts with IFT88. Interacts with IFT57. Interacts with RABL2/RABL2A; binds preferentially to GDP-bound RABL2.

It is found in the cell projection. The protein localises to the cilium. In terms of biological role, required for the maintenance and formation of cilia. Plays an indirect role in hedgehog (Hh) signaling, cilia being required for all activity of the hedgehog pathway. The sequence is that of Intraflagellar transport protein 172 homolog (IFT172) from Homo sapiens (Human).